A 579-amino-acid chain; its full sequence is Protein PLASTID MOVEMENT IMPAIRED 15 (579 aa).

4 coiled-coil regions span residues 90 to 161 (EVLK…NEEH), 188 to 216 (KVLD…IEIE), 383 to 419 (QKTK…KLES), and 481 to 501 (LMKT…EERE).

This sequence belongs to the WEB family.

Its function is as follows. Required for the chloroplast avoidance response under high intensity blue light. This avoidance response consists in the relocation of chloroplasts on the anticlinal side of exposed cells. The chain is Protein PLASTID MOVEMENT IMPAIRED 15 (PMI15) from Arabidopsis thaliana (Mouse-ear cress).